We begin with the raw amino-acid sequence, 394 residues long: N-acetylgalactosamine-6-phosphate deacetylase (394 aa).

Zn(2+) is bound at residue E137. Residue 148-149 coordinates substrate; sequence CH. Residues H201 and H222 each contribute to the Zn(2+) site. Residues 225 to 226, R233, and 254 to 257 each bind substrate; these read NG and DGQH. D280 (proton donor/acceptor) is an active-site residue. 313–315 contributes to the substrate binding site; it reads LAG.

It belongs to the metallo-dependent hydrolases superfamily. NagA family.

Its subcellular location is the cytoplasm. The enzyme catalyses N-acetyl-D-galactosamine 6-phosphate + H2O = D-galactosamine 6-phosphate + acetate. It catalyses the reaction N-acetyl-D-glucosamine 6-phosphate + H2O = D-glucosamine 6-phosphate + acetate. In terms of biological role, involved in the pathway of N-acetyl-D-galactosamine degradation. Catalyzes the conversion of N-acetyl-D-galactosamine 6-phosphate to D-galactosamine 6-phosphate and acetate. It can also catalyze the conversion of N-acetyl-D-glucosamine 6-phosphate. The chain is N-acetylgalactosamine-6-phosphate deacetylase from Shewanella sp. (strain ANA-3).